The sequence spans 428 residues: 26S proteasome regulatory subunit 6B homolog (428 aa).

Residue Met-1 is modified to N-acetylmethionine. Gly-213 to Thr-220 lines the ATP pocket. Lys-280 is covalently cross-linked (Glycyl lysine isopeptide (Lys-Gly) (interchain with G-Cter in ubiquitin)).

The protein belongs to the AAA ATPase family. N-acetylated by NAT3.

It localises to the cytoplasm. Its subcellular location is the nucleus. The 26S proteasome is involved in the ATP-dependent degradation of ubiquitinated proteins. The regulatory (or ATPase) complex confers ATP dependency and substrate specificity to the 26S complex. In Saccharomyces cerevisiae (strain ATCC 204508 / S288c) (Baker's yeast), this protein is 26S proteasome regulatory subunit 6B homolog (RPT3).